The chain runs to 93 residues: DNA-directed RNA polymerase subunit omega (93 aa).

Belongs to the RNA polymerase subunit omega family. The RNAP catalytic core consists of 2 alpha, 1 beta, 1 beta' and 1 omega subunit. When a sigma factor is associated with the core the holoenzyme is formed, which can initiate transcription.

The enzyme catalyses RNA(n) + a ribonucleoside 5'-triphosphate = RNA(n+1) + diphosphate. In terms of biological role, promotes RNA polymerase assembly. Latches the N- and C-terminal regions of the beta' subunit thereby facilitating its interaction with the beta and alpha subunits. This Acinetobacter baylyi (strain ATCC 33305 / BD413 / ADP1) protein is DNA-directed RNA polymerase subunit omega.